The chain runs to 559 residues: MVKETKRMIQAKKGIELECKGWEQEAVLRMLYNNLDPEVAEKPDELIVYGGIGKAARNWAAFEAIVEQLRTLEKDETLLIQSGKPVGRFKTHEQAPRVLLSNSVLVPKWAHWEHFNELEKQGLMMYGQMTAGSWIYIGSQGILQGTYETFAELARQHFGGSLKGTLTLTAGLGGMGGAQPLAVTMNGGVVIGVDVDRSRIEKRIATKYTDRITESLDQALAWASEAKAKGEPLSIGLVGNAAHLHHEILQRGVEVDVVTDQTSAHDPLNGYIPEGHSLEGAELLRKENPQRYMALAKQSMKKHVEAMLAFQRRGAIVFDYGNNIRQVAKDEGLEEAFAFPGFVPAYIRPLFCEGKGPFRWAALSGDPEDIYRTDRLIKELFPENEALIRWIDIAQEKVTFQGLPARICWLGYGERMKMGLEINRLVRNGELKAPIVIGRDHLDCGSVASPNRETEAMKDGSDAVGDWAILNALINTAAGGSWISVHHGGGVGMGYSLHAGMVVVADGTENAEKRLRRVLTTDPGMGIIRHADAGYELAKQVAREKGVMIPMEDKNEEGV.

Residues 50–51 (GG), glutamine 128, 174–176 (GMG), aspartate 194, arginine 199, 240–241 (NA), 261–265 (QTSAH), 271–272 (YI), and tyrosine 320 each bind NAD(+). Cysteine 408 is a catalytic residue. Residue glycine 490 participates in NAD(+) binding.

The protein belongs to the urocanase family. Requires NAD(+) as cofactor.

Its subcellular location is the cytoplasm. It carries out the reaction 4-imidazolone-5-propanoate = trans-urocanate + H2O. It participates in amino-acid degradation; L-histidine degradation into L-glutamate; N-formimidoyl-L-glutamate from L-histidine: step 2/3. Functionally, catalyzes the conversion of urocanate to 4-imidazolone-5-propionate. The polypeptide is Urocanate hydratase (Halalkalibacterium halodurans (strain ATCC BAA-125 / DSM 18197 / FERM 7344 / JCM 9153 / C-125) (Bacillus halodurans)).